Reading from the N-terminus, the 285-residue chain is D-apionate oxidoisomerase (285 aa).

Residues 15–17 (GKM), Glu-36, and Asp-71 each bind NAD(+). The Zn(2+) site is built by His-116 and Glu-186.

It belongs to the ApnO family. The cofactor is Zn(2+).

It carries out the reaction D-apionate + NAD(+) = 3-oxoisoapionate + NADH + H(+). Its pathway is carbohydrate metabolism. Its function is as follows. Involved in catabolism of D-apiose. Catalyzes the conversion of D-apionate to 3-oxo-isoapionate. This is D-apionate oxidoisomerase from Pectobacterium atrosepticum (strain SCRI 1043 / ATCC BAA-672) (Erwinia carotovora subsp. atroseptica).